A 664-amino-acid chain; its full sequence is Type IV inositol polyphosphate 5-phosphatase 3 (664 aa).

The interval 35-76 (GRDPEYGADTDNESENEDAREDNDDSSSDEEGGSGSRGRESK) is disordered. Positions 40–66 (YGADTDNESENEDAREDNDDSSSDEEG) are enriched in acidic residues. 2 catalytic regions span residues 514–529 (ERII…LSSS) and 592–607 (PKRT…SYGK).

This sequence belongs to the inositol polyphosphate 5-phosphatase family.

The catalysed reaction is a 1,2-diacyl-sn-glycero-3-phospho-(1D-myo-inositol-4,5-bisphosphate) + H2O = a 1,2-diacyl-sn-glycero-3-phospho-(1D-myo-inositol 4-phosphate) + phosphate. It catalyses the reaction a 1,2-diacyl-sn-glycero-3-phospho-(1D-myo-inositol-3,4,5-trisphosphate) + H2O = a 1,2-diacyl-sn-glycero-3-phospho-(1D-myo-inositol-3,4-bisphosphate) + phosphate. Has phosphatase activity toward PtdIns(4,5)P2 and PtdIns(3,4,5)P3. This chain is Type IV inositol polyphosphate 5-phosphatase 3, found in Arabidopsis thaliana (Mouse-ear cress).